A 761-amino-acid polypeptide reads, in one-letter code: uncharacterized protein (761 aa).

Residue M1 is modified to N-acetylmethionine. Disordered regions lie at residues M1–S82, S229–A320, and F590–Q640. Over residues N13–L27 the composition is skewed to polar residues. The segment covering P28–T45 has biased composition (low complexity). 4 stretches are compositionally biased toward polar residues: residues T244–E259, N266–H276, F590–D604, and S627–Q640.

In terms of processing, phosphorylated by CDC28.

This is an uncharacterized protein from Saccharomyces cerevisiae (strain ATCC 204508 / S288c) (Baker's yeast).